Consider the following 375-residue polypeptide: 23S rRNA (uracil(747)-C(5))-methyltransferase RlmC (375 aa).

Residues Cys3, Cys11, Cys14, and Cys87 each coordinate [4Fe-4S] cluster. 4 residues coordinate S-adenosyl-L-methionine: Gln212, Phe241, Glu262, and Asn307. Cys334 functions as the Nucleophile in the catalytic mechanism.

This sequence belongs to the class I-like SAM-binding methyltransferase superfamily. RNA M5U methyltransferase family. RlmC subfamily.

It catalyses the reaction uridine(747) in 23S rRNA + S-adenosyl-L-methionine = 5-methyluridine(747) in 23S rRNA + S-adenosyl-L-homocysteine + H(+). Its function is as follows. Catalyzes the formation of 5-methyl-uridine at position 747 (m5U747) in 23S rRNA. The polypeptide is 23S rRNA (uracil(747)-C(5))-methyltransferase RlmC (Shigella dysenteriae serotype 1 (strain Sd197)).